Consider the following 235-residue polypeptide: Elongation factor Tu, chloroplastic (235 aa).

In terms of domain architecture, tr-type G spans 1–125 (KNMITGAAQM…AVDSYIPTPE (125 aa)). 47–50 (NKED) serves as a coordination point for GTP.

The protein belongs to the TRAFAC class translation factor GTPase superfamily. Classic translation factor GTPase family. EF-Tu/EF-1A subfamily.

Its subcellular location is the plastid. The protein localises to the chloroplast. It carries out the reaction GTP + H2O = GDP + phosphate + H(+). In terms of biological role, GTP hydrolase that promotes the GTP-dependent binding of aminoacyl-tRNA to the A-site of ribosomes during protein biosynthesis. This is Elongation factor Tu, chloroplastic (tufA) from Mantoniella squamata (Unicellular alga).